The primary structure comprises 227 residues: 7-cyano-7-deazaguanine synthase (227 aa).

ATP is bound at residue 8–18; that stretch reads VSGGADSATVL. Cysteine 192, cysteine 202, cysteine 205, and cysteine 208 together coordinate Zn(2+).

It belongs to the QueC family. Zn(2+) is required as a cofactor.

It carries out the reaction 7-carboxy-7-deazaguanine + NH4(+) + ATP = 7-cyano-7-deazaguanine + ADP + phosphate + H2O + H(+). It participates in purine metabolism; 7-cyano-7-deazaguanine biosynthesis. Its function is as follows. Catalyzes the ATP-dependent conversion of 7-carboxy-7-deazaguanine (CDG) to 7-cyano-7-deazaguanine (preQ(0)). The chain is 7-cyano-7-deazaguanine synthase from Rickettsia akari (strain Hartford).